A 699-amino-acid polypeptide reads, in one-letter code: Elongation factor G (699 aa).

Residues 8-288 (EDYRNFGIMA…AVVDYLPSPI (281 aa)) form the tr-type G domain. GTP is bound by residues 17–24 (AHIDAGKT), 86–90 (DTPGH), and 140–143 (NKMD).

This sequence belongs to the TRAFAC class translation factor GTPase superfamily. Classic translation factor GTPase family. EF-G/EF-2 subfamily.

It localises to the cytoplasm. In terms of biological role, catalyzes the GTP-dependent ribosomal translocation step during translation elongation. During this step, the ribosome changes from the pre-translocational (PRE) to the post-translocational (POST) state as the newly formed A-site-bound peptidyl-tRNA and P-site-bound deacylated tRNA move to the P and E sites, respectively. Catalyzes the coordinated movement of the two tRNA molecules, the mRNA and conformational changes in the ribosome. The polypeptide is Elongation factor G (Sinorhizobium fredii (strain NBRC 101917 / NGR234)).